The chain runs to 374 residues: MPLFNSPFADLDLIRQPEQANDPLLAFDAADQYLLEHLAAQAPAANCKVLVLNDSFGALAASLAGRLEVISSGDSHLARMALEKNLARNGKGFDSVPFMPANETWQGPFDRVLVRVPKTLALLEEQLIRLQGQLAPGAQVIAGAMIKHLPRAAGDLMEKYIGPVQASLAQKKARLLTATVAERPLASSPYPSRYRLDSPALELVNHANVFCREGLDIGTRAFLPHLPRNLGQARVADLGCGNGVLAIASALANPDAHYTLVDESYMAVQSARDNWQAALGERAVEIHAADGLAGQEKQSLEVVLCNPPFHQQQVVGDFLAWRMFQQAREALVVGGALYIVGNRHLGYHSKLARLFRGVEQVAATPKFVVLKARK.

This sequence belongs to the methyltransferase superfamily. RlmG family.

The protein resides in the cytoplasm. It catalyses the reaction guanosine(1835) in 23S rRNA + S-adenosyl-L-methionine = N(2)-methylguanosine(1835) in 23S rRNA + S-adenosyl-L-homocysteine + H(+). Functionally, specifically methylates the guanine in position 1835 (m2G1835) of 23S rRNA. In Pseudomonas entomophila (strain L48), this protein is Ribosomal RNA large subunit methyltransferase G.